We begin with the raw amino-acid sequence, 148 residues long: Large ribosomal subunit protein uL15 (148 aa).

Positions Met1–Gly30 are enriched in basic residues. Positions Met1–Gly37 are disordered.

This sequence belongs to the universal ribosomal protein uL15 family.

The sequence is that of Large ribosomal subunit protein uL15 (RpL27A) from Tenebrio molitor (Yellow mealworm beetle).